The primary structure comprises 81 residues: Photosystem I iron-sulfur center (81 aa).

2 4Fe-4S ferredoxin-type domains span residues 2–31 and 39–68; these read SHSV…MVSW and IASA…VRVY. Residues cysteine 11, cysteine 14, cysteine 17, cysteine 21, cysteine 48, cysteine 51, cysteine 54, and cysteine 58 each coordinate [4Fe-4S] cluster.

The eukaryotic PSI reaction center is composed of at least 11 subunits. Requires [4Fe-4S] cluster as cofactor.

The protein resides in the plastid. The protein localises to the chloroplast thylakoid membrane. It carries out the reaction reduced [plastocyanin] + hnu + oxidized [2Fe-2S]-[ferredoxin] = oxidized [plastocyanin] + reduced [2Fe-2S]-[ferredoxin]. In terms of biological role, apoprotein for the two 4Fe-4S centers FA and FB of photosystem I (PSI); essential for photochemical activity. FB is the terminal electron acceptor of PSI, donating electrons to ferredoxin. The C-terminus interacts with PsaA/B/D and helps assemble the protein into the PSI complex. Required for binding of PsaD and PsaE to PSI. PSI is a plastocyanin/cytochrome c6-ferredoxin oxidoreductase, converting photonic excitation into a charge separation, which transfers an electron from the donor P700 chlorophyll pair to the spectroscopically characterized acceptors A0, A1, FX, FA and FB in turn. This is Photosystem I iron-sulfur center from Rhodomonas salina (Cryptomonas salina).